We begin with the raw amino-acid sequence, 345 residues long: High mobility group protein 20A (345 aa).

Disordered stretches follow at residues 1–124 (MENT…TERP) and 167–198 (QYQN…VRGV). Polar residues-rich tracts occupy residues 32–48 (LSGS…PTLQ) and 57–67 (LQQSGEQQLGN). The span at 80-94 (TRRGGWTKGRKRKRS) shows a compositional bias: basic residues. The HMG box DNA-binding region spans 101–169 (PKAPLTGYVR…RYTKELQQYQ (69 aa)). The segment covering 112-124 (MNERREQLRTERP) has biased composition (basic and acidic residues). Positions 167–180 (QYQNTDAYQTYSRK) are enriched in polar residues. The stretch at 227–290 (SKAREAELRQ…QHLQSVRQAL (64 aa)) forms a coiled coil.

The protein localises to the nucleus. Functionally, plays a role in neuronal differentiation. The chain is High mobility group protein 20A (hmg20a) from Xenopus tropicalis (Western clawed frog).